The following is a 158-amino-acid chain: Mitotic-spindle organizing protein 2B (158 aa).

Ser34 carries the phosphoserine modification. Positions 84 to 158 (RLASEPQDPA…PGKSPTRGST (75 aa)) are disordered. Residues 111 to 122 (GSAALGGALALA) show a composition bias toward low complexity. Over residues 128–140 (EGSSQRMPRQPSA) the composition is skewed to polar residues. Position 152 is a phosphoserine (Ser152).

This sequence belongs to the MOZART2 family. In terms of assembly, associates with the gamma-tubulin ring complex (gTuRC) consisting of TUBGCP2, TUBGCP3, TUBGCP4, TUBGCP5 and TUBGCP6 and gamma-tubulin TUBG1 or TUBG2; within the complex, interacts with TUBGCP2; the interaction plays a role in gTuRC activation. Interacts with TUBG1.

The protein localises to the cytoplasm. It localises to the cytoskeleton. Its subcellular location is the microtubule organizing center. It is found in the centrosome. The protein resides in the spindle. In terms of biological role, required for the recruitment and the assembly of the gamma-tubulin ring complex (gTuRC) at the centrosome. The gTuRC regulates the minus-end nucleation of alpha-beta tubulin heterodimers that grow into microtubule protafilaments, a critical step in centrosome duplication and spindle formation. The sequence is that of Mitotic-spindle organizing protein 2B (MZT2B) from Homo sapiens (Human).